The chain runs to 300 residues: Putative S-adenosyl-L-methionine-dependent methyltransferase MAB_4328c (300 aa).

S-adenosyl-L-methionine is bound by residues D126 and D155–L156.

Belongs to the UPF0677 family.

In terms of biological role, exhibits S-adenosyl-L-methionine-dependent methyltransferase activity. This chain is Putative S-adenosyl-L-methionine-dependent methyltransferase MAB_4328c, found in Mycobacteroides abscessus (strain ATCC 19977 / DSM 44196 / CCUG 20993 / CIP 104536 / JCM 13569 / NCTC 13031 / TMC 1543 / L948) (Mycobacterium abscessus).